A 314-amino-acid chain; its full sequence is Probable 2-(5''-triphosphoribosyl)-3'-dephosphocoenzyme-A synthase (314 aa).

It belongs to the CitG/MdcB family.

It carries out the reaction 3'-dephospho-CoA + ATP = 2'-(5''-triphospho-alpha-D-ribosyl)-3'-dephospho-CoA + adenine. This Photobacterium profundum (strain SS9) protein is Probable 2-(5''-triphosphoribosyl)-3'-dephosphocoenzyme-A synthase.